Here is a 298-residue protein sequence, read N- to C-terminus: ATP phosphoribosyltransferase (298 aa).

Belongs to the ATP phosphoribosyltransferase family. Long subfamily. The cofactor is Mg(2+).

The protein resides in the cytoplasm. The catalysed reaction is 1-(5-phospho-beta-D-ribosyl)-ATP + diphosphate = 5-phospho-alpha-D-ribose 1-diphosphate + ATP. The protein operates within amino-acid biosynthesis; L-histidine biosynthesis; L-histidine from 5-phospho-alpha-D-ribose 1-diphosphate: step 1/9. Feedback inhibited by histidine. Catalyzes the condensation of ATP and 5-phosphoribose 1-diphosphate to form N'-(5'-phosphoribosyl)-ATP (PR-ATP). Has a crucial role in the pathway because the rate of histidine biosynthesis seems to be controlled primarily by regulation of HisG enzymatic activity. The polypeptide is ATP phosphoribosyltransferase (Vibrio parahaemolyticus serotype O3:K6 (strain RIMD 2210633)).